Here is a 254-residue protein sequence, read N- to C-terminus: Imidazole glycerol phosphate synthase subunit HisF (254 aa).

Residues D11 and D130 contribute to the active site.

The protein belongs to the HisA/HisF family. Heterodimer of HisH and HisF.

The protein localises to the cytoplasm. It catalyses the reaction 5-[(5-phospho-1-deoxy-D-ribulos-1-ylimino)methylamino]-1-(5-phospho-beta-D-ribosyl)imidazole-4-carboxamide + L-glutamine = D-erythro-1-(imidazol-4-yl)glycerol 3-phosphate + 5-amino-1-(5-phospho-beta-D-ribosyl)imidazole-4-carboxamide + L-glutamate + H(+). It participates in amino-acid biosynthesis; L-histidine biosynthesis; L-histidine from 5-phospho-alpha-D-ribose 1-diphosphate: step 5/9. IGPS catalyzes the conversion of PRFAR and glutamine to IGP, AICAR and glutamate. The HisF subunit catalyzes the cyclization activity that produces IGP and AICAR from PRFAR using the ammonia provided by the HisH subunit. The sequence is that of Imidazole glycerol phosphate synthase subunit HisF from Oceanobacillus iheyensis (strain DSM 14371 / CIP 107618 / JCM 11309 / KCTC 3954 / HTE831).